Reading from the N-terminus, the 486-residue chain is Outer dynein arm-docking complex subunit 4 (486 aa).

3 TPR repeats span residues 14–47 (FTTY…QPDD), 49–81 (NCLV…NKNY), and 82–115 (FKGL…RPEL). A disordered region spans residues 153–180 (GVHPQNLNPSNKKESKKHSKKTDKGEKT). 4 TPR repeats span residues 314–347 (GNLH…AKKC), 354–387 (SRAL…ACGG), 391–424 (AWLF…ADDI), and 431–464 (LNAS…AKLL).

Component of the outer dynein arm-docking complex along with ODAD1, ODAD2 and ODAD3.

The protein resides in the cytoplasm. It localises to the cytoskeleton. It is found in the cilium axoneme. In terms of biological role, component of the outer dynein arm-docking complex (ODA-DC) that mediates outer dynein arms (ODA) binding onto the doublet microtubule. Plays an essential role for the assembly of ODA-DC and in the docking of ODA in ciliary axoneme. This Danio rerio (Zebrafish) protein is Outer dynein arm-docking complex subunit 4 (odad4).